The primary structure comprises 181 residues: MYGKLLICATASINVININHYIVELKQHFDEVNILFSPSSKNFINTDVLKLFCDNLYDEIKDPLLNHINIVENHEYILVLPASANTINKIANGICDNLLTTVCLTGYQKLFIFPNMNIRMWGNPFLQKNIDLLKNNDVKVYSPDMNKSFEISSGRYKNNITMPNIENVLNFVLNNEKRPLD.

H67 is an active-site residue.

The protein belongs to the HFCD (homooligomeric flavin containing Cys decarboxylase) superfamily. Homododecamer. The cofactor is FMN.

Catalyzes the removal of two reducing equivalents (oxidative decarboxylation) from the cysteine residue of the C-terminal meso-lanthionine of epidermin to form a --C==C-- double bond. The sequence is that of Epidermin decarboxylase (epiD) from Staphylococcus epidermidis.